Consider the following 309-residue polypeptide: Olfactory receptor 1A1 (309 aa).

The Extracellular segment spans residues 1–25 (MRENNQSSTLEFILLGVTGQQEQED). N-linked (GlcNAc...) asparagine glycosylation is present at asparagine 5. The chain crosses the membrane as a helical span at residues 26–49 (FFYILFLFIYPITLIGNLLIVLAI). At 50 to 57 (CSDVHLHN) the chain is on the cytoplasmic side. A helical membrane pass occupies residues 58–79 (PMYFLLANLSLVDIFFSSVTIP). Residues 80–100 (KMLANHLLGSKSISFGGCLTQ) are Extracellular-facing. A disulfide bridge connects residues cysteine 97 and cysteine 189. Residues 101–120 (MYFMIALGNTDSYILAAMAY) form a helical membrane-spanning segment. The Cytoplasmic segment spans residues 121–139 (DRAVAISRPLHYTTIMSPR). Residues 140-158 (SCIWLIAGSWVIGNANALP) traverse the membrane as a helical segment. The Extracellular segment spans residues 159–195 (HTLLTASLSFCGNQEVANFYCDITPLLKLSCSDIHFH). A helical transmembrane segment spans residues 196–218 (VKMMYLGVGIFSVPLLCIIVSYI). Over 219 to 235 (RVFSTVFQVPSTKGVLK) the chain is Cytoplasmic. Residues 236 to 258 (AFSTCGSHLTVVSLYYGTVMGMY) form a helical membrane-spanning segment. Topologically, residues 259 to 270 (FRPLTNYSLKDA) are extracellular. A glycan (N-linked (GlcNAc...) asparagine) is linked at asparagine 264. The helical transmembrane segment at 271–290 (VITVMYTAVTPMLNPFIYSL) threads the bilayer. Residues 291–309 (RNRDVKAALRKLFNKRISS) are Cytoplasmic-facing.

The protein belongs to the G-protein coupled receptor 1 family.

Its subcellular location is the cell membrane. Odorant receptor. The polypeptide is Olfactory receptor 1A1 (OR1A1) (Pan troglodytes (Chimpanzee)).